Here is a 337-residue protein sequence, read N- to C-terminus: Protein ABHD13 (337 aa).

Residues 30-50 form a helical; Signal-anchor for type II membrane protein membrane-spanning segment; that stretch reads LLALILTFHLYGGFVLLGLIL. Catalysis depends on charge relay system residues Ser-193, Asp-268, and His-298. N-linked (GlcNAc...) asparagine glycosylation is present at Asn-299.

Belongs to the serine esterase family.

The protein localises to the membrane. This Danio rerio (Zebrafish) protein is Protein ABHD13.